Consider the following 340-residue polypeptide: Uroporphyrinogen decarboxylase (340 aa).

Residues 21–25, aspartate 71, tyrosine 148, serine 203, and histidine 316 each bind substrate; that span reads RQAGR.

This sequence belongs to the uroporphyrinogen decarboxylase family. Homodimer.

It localises to the cytoplasm. The catalysed reaction is uroporphyrinogen III + 4 H(+) = coproporphyrinogen III + 4 CO2. It participates in porphyrin-containing compound metabolism; protoporphyrin-IX biosynthesis; coproporphyrinogen-III from 5-aminolevulinate: step 4/4. Functionally, catalyzes the decarboxylation of four acetate groups of uroporphyrinogen-III to yield coproporphyrinogen-III. The protein is Uroporphyrinogen decarboxylase of Campylobacter jejuni subsp. jejuni serotype O:23/36 (strain 81-176).